A 957-amino-acid polypeptide reads, in one-letter code: Glycine dehydrogenase (decarboxylating) (957 aa).

Lys708 is modified (N6-(pyridoxal phosphate)lysine).

The protein belongs to the GcvP family. The glycine cleavage system is composed of four proteins: P, T, L and H. Pyridoxal 5'-phosphate serves as cofactor.

It carries out the reaction N(6)-[(R)-lipoyl]-L-lysyl-[glycine-cleavage complex H protein] + glycine + H(+) = N(6)-[(R)-S(8)-aminomethyldihydrolipoyl]-L-lysyl-[glycine-cleavage complex H protein] + CO2. Functionally, the glycine cleavage system catalyzes the degradation of glycine. The P protein binds the alpha-amino group of glycine through its pyridoxal phosphate cofactor; CO(2) is released and the remaining methylamine moiety is then transferred to the lipoamide cofactor of the H protein. The protein is Glycine dehydrogenase (decarboxylating) of Klebsiella pneumoniae (strain 342).